A 195-amino-acid chain; its full sequence is ATP-dependent Clp protease proteolytic subunit (195 aa).

S98 (nucleophile) is an active-site residue. Residue H123 is part of the active site.

This sequence belongs to the peptidase S14 family. As to quaternary structure, fourteen ClpP subunits assemble into 2 heptameric rings which stack back to back to give a disk-like structure with a central cavity, resembling the structure of eukaryotic proteasomes.

The protein resides in the cytoplasm. The catalysed reaction is Hydrolysis of proteins to small peptides in the presence of ATP and magnesium. alpha-casein is the usual test substrate. In the absence of ATP, only oligopeptides shorter than five residues are hydrolyzed (such as succinyl-Leu-Tyr-|-NHMec, and Leu-Tyr-Leu-|-Tyr-Trp, in which cleavage of the -Tyr-|-Leu- and -Tyr-|-Trp bonds also occurs).. Its function is as follows. Cleaves peptides in various proteins in a process that requires ATP hydrolysis. Has a chymotrypsin-like activity. Plays a major role in the degradation of misfolded proteins. In Caldanaerobacter subterraneus subsp. tengcongensis (strain DSM 15242 / JCM 11007 / NBRC 100824 / MB4) (Thermoanaerobacter tengcongensis), this protein is ATP-dependent Clp protease proteolytic subunit.